A 2131-amino-acid polypeptide reads, in one-letter code: Protein Ycf2 (2131 aa).

1484 to 1491 (GSIGTGRS) contributes to the ATP binding site.

The protein belongs to the Ycf2 family.

The protein localises to the plastid. Its subcellular location is the chloroplast stroma. Probable ATPase of unknown function. Its presence in a non-photosynthetic plant (Epifagus virginiana) and experiments in tobacco indicate that it has an essential function which is probably not related to photosynthesis. This Spinacia oleracea (Spinach) protein is Protein Ycf2 (ycf2-A).